A 173-amino-acid chain; its full sequence is MGAQRASMQRPAADTPDGFGVAVVREEGRWRCSPMGPKALTSLRAAETELRELRSAGAVFGLLDVDDEFFVIVRPAPSGTRLLLSDATAALDYDIAAEVLDNLDAEIDPEDLEDADPFEEGDLGLLSDIGLPEAVLGVILDETDLYADEQLGRIAREMGFADQLSAVIDRLGR.

In Mycobacterium tuberculosis (strain ATCC 25618 / H37Rv), this protein is Protein Rv3753c.